The chain runs to 427 residues: MHLIDYLLLLLVGLLALSHGQLHVEHDGESCSNSSHQQILETGEGSPSLKIAPANADFAFRFYYLIASETPGKNIFFSPLSISAAYAMLSLGACSHSRSQILEGLGFNLTELSESDVHRGFQHLLHTLNLPGHGLETRVGSALFLSHNLKFLAKFLNDTMAVYEAKLFHTNFYDTVGTIQLINDHVKKETRGKIVDLVSELKKDVLMVLVNYIYFKALWEKPFISSRTTPKDFYVDENTTVRVPMMLQDQEHHWYLHDRYLPCSVLRMDYKGDATVFFILPNQGKMREIEEVLTPEMLMRWNNLLRKRNFYKKLELHLPKFSISGSYVLDQILPRLGFTDLFSKWADLSGITKQQKLEASKSFHKATLDVDEAGTEAAAATSFAIKFFSAQTNRHILRFNRPFLVVIFSTSTQSVLFLGKVVDPTKP.

The N-terminal stretch at 1-20 (MHLIDYLLLLLVGLLALSHG) is a signal peptide. N-linked (GlcNAc...) asparagine glycosylation is found at N33, N108, and N157. N238 is a glycosylation site (N-linked (GlcNAc...) (complex) asparagine).

It belongs to the serpin family. In terms of assembly, monomer and some homodimers. In terms of processing, the N-terminus is blocked. Expressed by the liver and secreted in plasma.

The protein localises to the secreted. Its function is as follows. Inhibits human amidolytic and kininogenase activities of tissue kallikrein. Inhibition is achieved by formation of an equimolar, heat- and SDS-stable complex between the inhibitor and the enzyme, and generation of a small C-terminal fragment of the inhibitor due to cleavage at the reactive site by tissue kallikrein. This Homo sapiens (Human) protein is Kallistatin (SERPINA4).